The primary structure comprises 159 residues: Antitoxin Xre (159 aa).

It belongs to the MbcA/ParS/Xre antitoxin family. As to quaternary structure, homodimer. Forms a complex with cognate toxin Res; the 2 toxin molecules dimerize and each contacts an Xre homodimer. Most Res-Xre contacts are between the antitoxin molecule closest to the toxin.

Functionally, probable antitoxin component of a type II toxin-antitoxin (TA) system. In vivo probably neutralizes the toxic effect of cognate toxin Res. This Pseudomonas putida (strain ATCC 47054 / DSM 6125 / CFBP 8728 / NCIMB 11950 / KT2440) protein is Antitoxin Xre.